Consider the following 283-residue polypeptide: Lolitrem B biosynthesis cluster protein S (283 aa).

Positions 1–27 (MSRSDWIFISLQGFFCLAGVIWKSREG) are cleaved as a signal peptide. The next 5 membrane-spanning stretches (helical) occupy residues 73 to 93 (WFWL…LIIL), 112 to 132 (LGYL…SLWI), 157 to 177 (IFWC…VATL), 219 to 239 (MTGT…ALEA), and 250 to 270 (VRMF…DVLL).

The protein belongs to the ltmS family.

It localises to the membrane. Part of the gene cluster that mediates the biosynthesis of lolitrems, indole-diterpene mycotoxins that are potent tremorgens in mammals, and are synthesized by clavicipitaceous fungal endophytes in association with their grass hosts. The geranylgeranyl diphosphate (GGPP) synthase ltmG is proposed to catalyze the first step in lolitrem biosynthesis. LtmG catalyzes a series of iterative condensations of isopentenyl diphosphate (IPP) with dimethylallyl diphosphate (DMAPP), geranyl diphosphate (GPP), and farnesyl diphosphate (FPP), to form GGPP. GGPP then condenses with indole-3-glycerol phosphate to form 3-geranylgeranylindole, an acyclic intermediate, to be incorporated into paxilline. Either ltmG or ltmC could be responsible for this step, as both are putative prenyl transferases. The FAD-dependent monooxygenase ltmM then catalyzes the epoxidation of the two terminal alkenes of the geranylgeranyl moiety, which is subsequently cyclized by ltmB, to paspaline. The cytochrome P450 monooxygenases ltmQ and ltmP can sequentially oxidize paspaline to terpendole E and terpendole F. Alternatively, ltmP converts paspaline to an intermediate which is oxidized by ltmQ to terpendole F. LtmF, ltmK, ltmE and ltmJ appear to be unique to the epichloe endophytes. The prenyltransferase ltmF is involved in the 27-hydroxyl-O-prenylation. The cytochrome P450 monooxygenase ltmK is required for the oxidative acetal ring formation. The multi-functional prenyltransferase ltmE is required for C20- and C21-prenylations of the indole ring of paspalanes and acts together with the cytochrome P450 monooxygenase ltmJ to yield lolitremanes by multiple oxidations and ring closures. The stereoisomer pairs of lolitriol and lolitrem N or lolitrem B and lolitrem F may be attributed to variations in the way in which ring closure can occur under the action of ltmJ. While the major product of this pathway is lolitrem B, the prenyl transferases and cytochrome P450 monooxygenases identified in this pathway have a remarkable versatility in their regio- and stereo-specificities to generate a diverse range of metabolites that are products of a metabolic grid rather than a linear pathway. The polypeptide is Lolitrem B biosynthesis cluster protein S (Epichloe festucae (strain Fl1)).